The chain runs to 293 residues: Sec-independent protein translocase protein TatC (293 aa).

The next 6 membrane-spanning stretches (helical) occupy residues 35-55, 87-107, 123-143, 173-193, 204-224, and 228-248; these read AAIATIIAAIIGTVFLYQPFI, LLKVGMYIGLVIASPVWLYQA, LFGFLTASIFAFACGVAISYF, ILKFVVTFSCAFIIPVILVGI, ILKSWRWVVVLVAVIAALTAP, and IMMMFVLMAPLLIFFFAAIGI.

It belongs to the TatC family. The Tat system comprises two distinct complexes: a TatABC complex, containing multiple copies of TatA, TatB and TatC subunits, and a separate TatA complex, containing only TatA subunits. Substrates initially bind to the TatABC complex, which probably triggers association of the separate TatA complex to form the active translocon.

It localises to the cell membrane. Its function is as follows. Part of the twin-arginine translocation (Tat) system that transports large folded proteins containing a characteristic twin-arginine motif in their signal peptide across membranes. Together with TatB, TatC is part of a receptor directly interacting with Tat signal peptides. The sequence is that of Sec-independent protein translocase protein TatC from Rothia mucilaginosa (strain DY-18) (Stomatococcus mucilaginosus).